The following is a 229-amino-acid chain: Lantibiotic transport ATP-binding protein SrtF (229 aa).

The ABC transporter domain maps to 2 to 225 (LKIQNLKKSY…EELFNNQILF (224 aa)). ATP is bound at residue 34 to 41 (GPNGAGKS).

This sequence belongs to the ABC transporter superfamily.

In terms of biological role, implicated in the export process of the lantibiotic SrtA. The chain is Lantibiotic transport ATP-binding protein SrtF (srtF) from Streptococcus pyogenes serotype M1.